Consider the following 138-residue polypeptide: Actophorin (138 aa).

Ser-2 carries the post-translational modification Blocked amino end (Ser). An ADF-H domain is found at 3–134 (GIAVSDDCVQ…SEDAVSERAK (132 aa)).

This sequence belongs to the actin-binding proteins ADF family. In terms of assembly, monomer.

It localises to the cytoplasm. Functionally, forms a one to one complex with monomeric actin. Can regulate the pool available for polymerization. Severs actin filaments in a dose-dependent manner. In Acanthamoeba castellanii (Amoeba), this protein is Actophorin.